A 95-amino-acid polypeptide reads, in one-letter code: Small ribosomal subunit protein bS6 (95 aa).

The protein belongs to the bacterial ribosomal protein bS6 family.

Its function is as follows. Binds together with bS18 to 16S ribosomal RNA. The sequence is that of Small ribosomal subunit protein bS6 from Exiguobacterium sp. (strain ATCC BAA-1283 / AT1b).